The sequence spans 233 residues: Aquaglyceroporin AqpS (233 aa).

2 consecutive transmembrane segments (helical) span residues 11-31 (VAEA…GIMA) and 40-60 (LALV…VTIL). An NPA 1 motif is present at residues 69–71 (NPA). A run of 3 helical transmembrane segments spans residues 89-109 (AYVI…HLMF), 125-145 (AQWL…LAGI), and 152-172 (VPWL…STSF). The short motif at 174 to 176 (NPA) is the NPA 2 element. A helical membrane pass occupies residues 193–213 (GDLPGFVIAELLGAVCALALM).

The protein belongs to the MIP/aquaporin (TC 1.A.8) family. NIP (TC 1.A.8.12) subfamily.

The protein localises to the cell inner membrane. In terms of biological role, involved in resistance to arsenic. Facilitates efflux of arsenite [As(III)]. Arsenate [As(V)] enters the cell through phosphate transport systems and is reduced to arsenite by the arsenate reductase ArsC. Internally generated arsenite flows out of the cell by downhill movement through AqpS. Can also transport the highly toxic methylarsenite [MAs(III)] and the relatively non-toxic methylarsenate [MAs(V)]. May be a component of an methylarsenite resistance pathway in which methylarsenite enters cells via AqpS, is oxidized by ArsH to methylarsenate, which exits the cells via AqpS. This pathway may confer a selective advantage for R.melliloti to grow in the presence of environmental methylarsenicals. This is Aquaglyceroporin AqpS from Rhizobium meliloti (strain 1021) (Ensifer meliloti).